We begin with the raw amino-acid sequence, 223 residues long: Chalcone--flavanone isomerase 2 (223 aa).

The substrate site is built by threonine 41, asparagine 106, and serine 183.

It belongs to the chalcone isomerase family.

The enzyme catalyses a chalcone = a flavanone.. Its pathway is secondary metabolite biosynthesis; flavonoid biosynthesis. Functionally, catalyzes the intramolecular cyclization of bicyclic chalcones into tricyclic (S)-flavanones. Responsible for the isomerization of 4,2',4',6'-tetrahydroxychalcone (also termed chalcone) into naringenin. In Arabidopsis thaliana (Mouse-ear cress), this protein is Chalcone--flavanone isomerase 2 (CHI2).